Here is a 58-residue protein sequence, read N- to C-terminus: Weak neurotoxin D2B (58 aa).

3 cysteine pairs are disulfide-bonded: Cys-3-Cys-24, Cys-17-Cys-41, and Cys-43-Cys-54.

Expressed by the venom gland.

The protein resides in the secreted. Functionally, binds to muscle nicotinic acetylcholine receptor (nAChR) and inhibit acetylcholine from binding to the receptor, thereby impairing neuromuscular transmission. The chain is Weak neurotoxin D2B from Micrurus pyrrhocryptus (Coral snake).